Here is a 179-residue protein sequence, read N- to C-terminus: Large ribosomal subunit protein uL6 (179 aa).

Belongs to the universal ribosomal protein uL6 family. In terms of assembly, part of the 50S ribosomal subunit.

In terms of biological role, this protein binds to the 23S rRNA, and is important in its secondary structure. It is located near the subunit interface in the base of the L7/L12 stalk, and near the tRNA binding site of the peptidyltransferase center. This Prochlorococcus marinus (strain MIT 9211) protein is Large ribosomal subunit protein uL6.